Reading from the N-terminus, the 872-residue chain is G-type lectin S-receptor-like serine/threonine-protein kinase At5g35370 (872 aa).

The N-terminal stretch at M1–S26 is a signal peptide. Residues I27 to P443 lie on the Extracellular side of the membrane. N33, N148, and N239 each carry an N-linked (GlcNAc...) asparagine glycan. Positions T35 to D156 constitute a Bulb-type lectin domain. An EGF-like; atypical domain is found at P283–K322. 2 disulfide bridges follow: C287–C299 and C293–C310. Residues N303, N307, N342, N379, and N389 are each glycosylated (N-linked (GlcNAc...) asparagine). The PAN domain occupies C338–S423. Cystine bridges form between C372-C394 and C376-C382. The helical transmembrane segment at V444–L464 threads the bilayer. Residues W465 to R872 lie on the Cytoplasmic side of the membrane. The Protein kinase domain occupies E515–M814. Residues I521–V529 and K543 contribute to the ATP site. The caM-binding stretch occupies residues G603–T620. The Proton acceptor role is filled by D639. At S656 the chain carries Phosphoserine. T673 is modified (phosphothreonine). Residues S716 and S859 each carry the phosphoserine modification. The disordered stretch occupies residues Q836–R872. Positions S851–S861 are enriched in low complexity. Residues Y862 to R872 are compositionally biased toward polar residues.

It belongs to the protein kinase superfamily. Ser/Thr protein kinase family.

It localises to the cell membrane. It carries out the reaction L-seryl-[protein] + ATP = O-phospho-L-seryl-[protein] + ADP + H(+). The enzyme catalyses L-threonyl-[protein] + ATP = O-phospho-L-threonyl-[protein] + ADP + H(+). This chain is G-type lectin S-receptor-like serine/threonine-protein kinase At5g35370, found in Arabidopsis thaliana (Mouse-ear cress).